A 577-amino-acid chain; its full sequence is Proline--tRNA ligase (577 aa).

This sequence belongs to the class-II aminoacyl-tRNA synthetase family. ProS type 1 subfamily. Homodimer.

The protein localises to the cytoplasm. It carries out the reaction tRNA(Pro) + L-proline + ATP = L-prolyl-tRNA(Pro) + AMP + diphosphate. Functionally, catalyzes the attachment of proline to tRNA(Pro) in a two-step reaction: proline is first activated by ATP to form Pro-AMP and then transferred to the acceptor end of tRNA(Pro). As ProRS can inadvertently accommodate and process non-cognate amino acids such as alanine and cysteine, to avoid such errors it has two additional distinct editing activities against alanine. One activity is designated as 'pretransfer' editing and involves the tRNA(Pro)-independent hydrolysis of activated Ala-AMP. The other activity is designated 'posttransfer' editing and involves deacylation of mischarged Ala-tRNA(Pro). The misacylated Cys-tRNA(Pro) is not edited by ProRS. The polypeptide is Proline--tRNA ligase (Helicobacter pylori (strain Shi470)).